The primary structure comprises 202 residues: Imidazoleglycerol-phosphate dehydratase (202 aa).

The protein belongs to the imidazoleglycerol-phosphate dehydratase family.

The protein localises to the cytoplasm. The enzyme catalyses D-erythro-1-(imidazol-4-yl)glycerol 3-phosphate = 3-(imidazol-4-yl)-2-oxopropyl phosphate + H2O. Its pathway is amino-acid biosynthesis; L-histidine biosynthesis; L-histidine from 5-phospho-alpha-D-ribose 1-diphosphate: step 6/9. The chain is Imidazoleglycerol-phosphate dehydratase from Parasynechococcus marenigrum (strain WH8102).